Consider the following 447-residue polypeptide: Sporulation protein YpeB (447 aa).

It belongs to the YpeB family.

Functionally, required for spore cortex hydrolysis during germination. Appears to be required for either expression, localization, activation or function of SleB. This chain is Sporulation protein YpeB, found in Oceanobacillus iheyensis (strain DSM 14371 / CIP 107618 / JCM 11309 / KCTC 3954 / HTE831).